Here is a 356-residue protein sequence, read N- to C-terminus: tRNA pseudouridine synthase D (356 aa).

Residue D84 is the Nucleophile of the active site. The TRUD domain occupies G159–V302.

Belongs to the pseudouridine synthase TruD family.

The enzyme catalyses uridine(13) in tRNA = pseudouridine(13) in tRNA. Its function is as follows. Responsible for synthesis of pseudouridine from uracil-13 in transfer RNAs. This Thermus thermophilus (strain ATCC 27634 / DSM 579 / HB8) protein is tRNA pseudouridine synthase D.